A 1173-amino-acid chain; its full sequence is Pleckstrin homology domain-containing family A member 6 (1173 aa).

Residues 1-22 are compositionally biased toward polar residues; that stretch reads MSNKTGGKRSATINSDIANHNM. A disordered region spans residues 1–39; that stretch reads MSNKTGGKRSATINSDIANHNMVSEVPPERPNIRATRTS. The PH domain maps to 59–158; the sequence is PVTKAGWLYK…WIQAMGEAAR (100 aa). The segment at 163 to 346 is disordered; that stretch reads PAQKSVPQPV…PSRFYPMPRR (184 aa). Residues 201 to 233 show a composition bias toward basic and acidic residues; the sequence is LEPEAKTRGEGDGRGCEKAERRPERPEVKKETL. Phosphoserine is present on residues Ser247 and Ser251. 2 stretches are compositionally biased toward polar residues: residues 270 to 281 and 311 to 322; these read NGWQYSSPSRPG and RKSSMNQLQQWV. A phosphoserine mark is found at Ser314, Ser459, Ser461, and Ser472. At Tyr492 the chain carries Phosphotyrosine. Position 665 is a phosphoserine (Ser665). Disordered regions lie at residues 737–872 and 888–984; these read RKNN…PRDI and ALNK…RPAY. Composition is skewed to low complexity over residues 761–782 and 789–799; these read SSNSPASPLSSASLTSPLSPFS and GSPTKPGSSEE. Pro residues predominate over residues 815-824; the sequence is ESPPTVPPLP. Ser864 is modified (phosphoserine). Thr868 carries the post-translational modification Phosphothreonine. Ser901 carries the post-translational modification Phosphoserine. Thr908 bears the Phosphothreonine mark. The segment covering 915–926 has biased composition (polar residues); sequence RTTNGLTNGLSS. The residue at position 925 (Ser925) is a Phosphoserine. Over residues 940–952 the composition is skewed to basic and acidic residues; that stretch reads GKVKMSVEEQMDR. The segment covering 953 to 967 has biased composition (basic residues); the sequence is MRRHQSGSMKEKRRS. Phosphoserine is present on residues Ser973, Ser979, and Ser992. A Phosphothreonine modification is found at Thr1045. The residue at position 1065 (Ser1065) is a Phosphoserine. Disordered regions lie at residues 1093 to 1114 and 1130 to 1173; these read PIGEGDSVDVPQDSESQLQEQE and RGRM…TMRV. Thr1140 is subject to Phosphothreonine. The segment covering 1141–1155 has biased composition (pro residues); that stretch reads PSPPTSPASPTPPVN. Ser1142 is modified (phosphoserine). Phosphothreonine is present on Thr1145. 2 positions are modified to phosphoserine: Ser1146 and Ser1149. Thr1151 carries the phosphothreonine modification.

This is Pleckstrin homology domain-containing family A member 6 (Plekha6) from Mus musculus (Mouse).